We begin with the raw amino-acid sequence, 327 residues long: 4-hydroxyproline 2-epimerase (327 aa).

Cys-85 acts as the Proton acceptor in catalysis. Residues 86–87 (GH), His-205, and Asp-231 each bind substrate. The active-site Proton donor is Cys-235. 236–237 (GT) contributes to the substrate binding site.

Belongs to the proline racemase family.

It catalyses the reaction trans-4-hydroxy-L-proline = cis-4-hydroxy-D-proline. Functionally, catalyzes the epimerization of trans-4-hydroxy-L-proline (t4LHyp) to cis-4-hydroxy-D-proline (c4DHyp). Displays no proline racemase activity. In Roseibium alexandrii (strain DSM 17067 / NCIMB 14079 / DFL-11) (Labrenzia alexandrii), this protein is 4-hydroxyproline 2-epimerase.